A 37-amino-acid polypeptide reads, in one-letter code: Large ribosomal subunit protein bL36 (37 aa).

It belongs to the bacterial ribosomal protein bL36 family.

The chain is Large ribosomal subunit protein bL36 from Mycoplasma pneumoniae (strain ATCC 29342 / M129 / Subtype 1) (Mycoplasmoides pneumoniae).